We begin with the raw amino-acid sequence, 253 residues long: Methionine aminopeptidase (253 aa).

Position 78 (H78) interacts with substrate. Residues D95, D106, and H169 each coordinate a divalent metal cation. H176 lines the substrate pocket. Residues E206 and E237 each contribute to the a divalent metal cation site.

The protein belongs to the peptidase M24A family. Methionine aminopeptidase type 1 subfamily. In terms of assembly, monomer. Requires Co(2+) as cofactor. Zn(2+) is required as a cofactor. Mn(2+) serves as cofactor. It depends on Fe(2+) as a cofactor.

The catalysed reaction is Release of N-terminal amino acids, preferentially methionine, from peptides and arylamides.. In terms of biological role, removes the N-terminal methionine from nascent proteins. The N-terminal methionine is often cleaved when the second residue in the primary sequence is small and uncharged (Met-Ala-, Cys, Gly, Pro, Ser, Thr, or Val). Requires deformylation of the N(alpha)-formylated initiator methionine before it can be hydrolyzed. In Helicobacter pylori (strain ATCC 700392 / 26695) (Campylobacter pylori), this protein is Methionine aminopeptidase.